We begin with the raw amino-acid sequence, 73 residues long: Putative antitoxin VapB18 (73 aa).

This sequence belongs to the UPF0330 family.

Its function is as follows. Possibly the antitoxin component of a type II toxin-antitoxin (TA) system. Its cognate toxin is VapC18 (Potential). This Archaeoglobus fulgidus (strain ATCC 49558 / DSM 4304 / JCM 9628 / NBRC 100126 / VC-16) protein is Putative antitoxin VapB18 (vapB18).